Here is a 312-residue protein sequence, read N- to C-terminus: MKLIRGIHNLKKINSNSAVSIGNFDGVHLGHQKLLSNLYKIGKKNNILTVLILFEPQPLEFLNNKNSPKRLTTIQNKIKYIQSWKIDIILCIKFNESFSSLSAEKFIKNILITKLNIKFIIIGDDFRFGSKRNGNISLLKEIGYQYNFKVIEISSLLYKNKIKISSTNIRKCLLENKIELARKLLGRPFSISGRVIHGNKIGRKLGYPTANISLRKNIPLNNGVYAVKISCFFNKKFVGICNIGIKPSYFSSKKHRLLEVHLFNFNLNLYEEKIEVFLYKKIRNECFFSSKNKLKEQISKDIEIVKKYFNLI.

Belongs to the RibF family.

It catalyses the reaction riboflavin + ATP = FMN + ADP + H(+). The catalysed reaction is FMN + ATP + H(+) = FAD + diphosphate. The protein operates within cofactor biosynthesis; FAD biosynthesis; FAD from FMN: step 1/1. It participates in cofactor biosynthesis; FMN biosynthesis; FMN from riboflavin (ATP route): step 1/1. Catalyzes the phosphorylation of riboflavin to FMN followed by the adenylation of FMN to FAD. This chain is Bifunctional riboflavin kinase/FMN adenylyltransferase (ribF), found in Buchnera aphidicola subsp. Schizaphis graminum (strain Sg).